The following is a 184-amino-acid chain: Ras-related protein Rap-1b (184 aa).

10–18 (GSGGVGKSA) serves as a coordination point for GTP. Residues 25-67 (QGIFVEKYDPTIEDSYRKQVEVDAQQCMLEILDTAGTEQFTAM) form an interaction with KRIT1 region. The Effector region motif lies at 32–40 (YDPTIEDSY). Position 39 is an ADP-ribosylserine; by botulinum toxin (S39). Residues 57–61 (DTAGT), 116–119 (NKCD), and 147–149 (SAK) each bind GTP. Position 179 is a phosphoserine; by PKA (S179). At C181 the chain carries Cysteine methyl ester. Residue C181 is the site of S-geranylgeranyl cysteine attachment. Residues 182–184 (QLL) constitute a propeptide, removed in mature form.

It belongs to the small GTPase superfamily. Ras family. As to quaternary structure, heterodimer with RAP1GAP. Interacts with EPAC2. Interacts with SGSM1. Interacts with SGSM2. Interacts with SGSM3. Interacts with KRIT1. Interacts with RAP1GDS1.

It is found in the cell membrane. The protein localises to the cytoplasm. Its subcellular location is the cytosol. It localises to the cell junction. The enzyme catalyses GTP + H2O = GDP + phosphate + H(+). With respect to regulation, activated by guanine nucleotide-exchange factor (GEF) EPAC2 in a cAMP-dependent manner. Functionally, GTP-binding protein that possesses intrinsic GTPase activity. Contributes to the polarizing activity of KRIT1 and CDH5 in the establishment and maintenance of correct endothelial cell polarity and vascular lumen. Required for the localization of phosphorylated PRKCZ, PARD3 and TIAM1 to the cell junction. Plays a role in the establishment of basal endothelial barrier function. This is Ras-related protein Rap-1b (Rap1b) from Rattus norvegicus (Rat).